Reading from the N-terminus, the 94-residue chain is Large ribosomal subunit protein uL29 (94 aa).

The interval 66 to 94 is disordered; that stretch reads NPGERKSRVLSRAKRKKKNLARLSAKVKG. A compositionally biased stretch (basic residues) spans 73-94; it reads RVLSRAKRKKKNLARLSAKVKG.

It belongs to the universal ribosomal protein uL29 family.

This Leptospira borgpetersenii serovar Hardjo-bovis (strain JB197) protein is Large ribosomal subunit protein uL29.